Reading from the N-terminus, the 125-residue chain is Large ribosomal subunit protein bL20 (125 aa).

It belongs to the bacterial ribosomal protein bL20 family.

Functionally, binds directly to 23S ribosomal RNA and is necessary for the in vitro assembly process of the 50S ribosomal subunit. It is not involved in the protein synthesizing functions of that subunit. In Methylobacterium sp. (strain 4-46), this protein is Large ribosomal subunit protein bL20.